The chain runs to 130 residues: Glycine cleavage system H protein (130 aa).

The Lipoyl-binding domain occupies 22-103 (KAYIGISDCA…PYGSWIAAIE (82 aa)). Position 63 is an N6-lipoyllysine (Lys63).

Belongs to the GcvH family. In terms of assembly, the glycine cleavage system is composed of four proteins: P, T, L and H. (R)-lipoate serves as cofactor.

Its function is as follows. The glycine cleavage system catalyzes the degradation of glycine. The H protein shuttles the methylamine group of glycine from the P protein to the T protein. The chain is Glycine cleavage system H protein from Clostridium botulinum (strain ATCC 19397 / Type A).